Reading from the N-terminus, the 799-residue chain is Lon protease (799 aa).

Residues 7 to 200 (LPVLPLRDIV…KVFALMEGEI (194 aa)) enclose the Lon N-terminal domain. Position 352–359 (352–359 (GPPGVGKT)) interacts with ATP. Positions 587–768 (VDQVGIVTGL…DEVLKHALTG (182 aa)) constitute a Lon proteolytic domain. Active-site residues include Ser-674 and Lys-717. A disordered region spans residues 772 to 799 (PVEWNEAEEPITTSAKKDDGDSDAMLTH).

The protein belongs to the peptidase S16 family. Homohexamer. Organized in a ring with a central cavity.

The protein resides in the cytoplasm. It carries out the reaction Hydrolysis of proteins in presence of ATP.. Functionally, ATP-dependent serine protease that mediates the selective degradation of mutant and abnormal proteins as well as certain short-lived regulatory proteins. Required for cellular homeostasis and for survival from DNA damage and developmental changes induced by stress. Degrades polypeptides processively to yield small peptide fragments that are 5 to 10 amino acids long. Binds to DNA in a double-stranded, site-specific manner. CcrM is an important target of the Lon protease pathway in C.crescentus. This is Lon protease from Caulobacter vibrioides (strain ATCC 19089 / CIP 103742 / CB 15) (Caulobacter crescentus).